The primary structure comprises 364 residues: Beta-parvin (364 aa).

Residues 1–57 are disordered; sequence MSSAPRSPTPRPRRMKKDESFLGKLGGTLARKRRAREVSDLQEEGKNAINSPMSPAL. S7 is subject to Phosphoserine. The segment covering 36–46 has biased composition (basic and acidic residues); it reads REVSDLQEEGK. Phosphoserine is present on S54. Calponin-homology (CH) domains are found at residues 87–194 and 254–361; these read KELV…MHFR and SVVK…TKYK.

This sequence belongs to the parvin family. As to quaternary structure, interacts with DYSF. Interacts with ILK, ARHGEF6, PXN (via LD motifs), ACTN2 and actin. In terms of tissue distribution, expressed predominantly in heart and skeletal muscle.

It is found in the cell junction. Its subcellular location is the focal adhesion. The protein localises to the cell membrane. The protein resides in the cytoplasm. It localises to the cytoskeleton. It is found in the cell projection. Its subcellular location is the lamellipodium. The protein localises to the myofibril. The protein resides in the sarcomere. It localises to the z line. Adapter protein that plays a role in integrin signaling via ILK and in activation of the GTPases CDC42 and RAC1 by guanine exchange factors, such as ARHGEF6. Is involved in the reorganization of the actin cytoskeleton and formation of lamellipodia. Plays a role in cell adhesion, cell spreading, establishment or maintenance of cell polarity, and cell migration. The polypeptide is Beta-parvin (PARVB) (Homo sapiens (Human)).